A 590-amino-acid chain; its full sequence is Shugoshin (590 aa).

The interval 1–20 is disordered; sequence MPKRKIAPNKESSRRTVSHD. Positions 11-20 are enriched in basic and acidic residues; the sequence is ESSRRTVSHD. Residues 25–86 are a coiled coil; the sequence is QIQEFQNLMD…QENVTLRSKT (62 aa). Disordered regions lie at residues 133-235, 291-337, and 411-550; these read LRTM…QVEE, PSNP…HSMK, and RNRE…NSNI. A compositionally biased stretch (basic and acidic residues) spans 173-185; it reads SFNKDDGPDLEPK. The span at 302–326 shows a compositional bias: low complexity; the sequence is PSATLPTTTSDASTVYPSSSSSTNS. Over residues 328 to 337 the composition is skewed to basic residues; that stretch reads PKTKIKHSMK. A compositionally biased stretch (basic and acidic residues) spans 448 to 459; it reads KKTEDEIHEDTA. The span at 513–526 shows a compositional bias: polar residues; it reads IVNNLSDENSTTRP. Positions 527 to 550 are enriched in low complexity; that stretch reads SKSSKGTSNNNNNYNNFDNNNSNI.

Belongs to the shugoshin family. Post-translationally, ubiquitinated by the anaphase promoting complex (APC) at the onset of anaphase, conducting to its degradation.

Its subcellular location is the chromosome. The protein resides in the centromere. It localises to the kinetochore. The protein localises to the cytoplasm. It is found in the cytoskeleton. Its subcellular location is the spindle pole. Its function is as follows. Plays a central role in chromosome cohesion during mitosis and meiosis divisions by preventing premature dissociation of cohesin complex from centromeres after prophase, when most of cohesin complex dissociates from chromosomes arms. Probably act by protecting REC8 and RAD21 from separase degradation during anaphase. Also acts as a spindle checkpoint component required for sensing tension between sister chromatids during mitosis, its degradation when they separate preventing cell cycle arrest and chromosome loss in anaphase, a time when sister chromatids are no longer under tension. The protein is Shugoshin (SGO1) of Saccharomyces cerevisiae (strain ATCC 204508 / S288c) (Baker's yeast).